The chain runs to 364 residues: Chorismate synthase (364 aa).

Positions 48 and 54 each coordinate NADP(+). Residues 125–127 (RSS), Gly-282, 297–301 (KPPAS), and Arg-323 each bind FMN.

This sequence belongs to the chorismate synthase family. As to quaternary structure, homotetramer. It depends on FMNH2 as a cofactor.

It catalyses the reaction 5-O-(1-carboxyvinyl)-3-phosphoshikimate = chorismate + phosphate. It participates in metabolic intermediate biosynthesis; chorismate biosynthesis; chorismate from D-erythrose 4-phosphate and phosphoenolpyruvate: step 7/7. Functionally, catalyzes the anti-1,4-elimination of the C-3 phosphate and the C-6 proR hydrogen from 5-enolpyruvylshikimate-3-phosphate (EPSP) to yield chorismate, which is the branch point compound that serves as the starting substrate for the three terminal pathways of aromatic amino acid biosynthesis. This reaction introduces a second double bond into the aromatic ring system. This chain is Chorismate synthase, found in Chloroflexus aggregans (strain MD-66 / DSM 9485).